Reading from the N-terminus, the 695-residue chain is MKFAEHLSAHITPEWRKQYIQYEAFKDMLYSAQDQAPSVEVTDEDTVKRYFAKFEEKFFQTCEKELAKINTFYSEKLAEAQRRFATLQNELQSSLDVQKESSGVTTLRQRRKPVFHLSHEERVQHRNIKDLKLAFSEFYLSLILLQNYQNLNFTGFRKILKKHDKILETSRGADWRVIHVEVAPFYTCKKINQLISETEAVVTNELEDGDRQKAMKRLRVPPLGAAQPAPAWTTFRVGLFCGIFIVLNITLVFAAVFKLETDRTVWPLIRIYRGGFLLIEFLFLLGINTYGWRQAGVNHVLIFELNPRNNLSHQHLFEIAGFLGILWCLSLLACFFAPISIIPIYVYPLALYGFMVFFLINPTKTFYYKSRFWLLKLLFRVFTAPFHKVGFADFWLADQLNSLSVILMDLEYMICFYSFELKWDESKGLLPNDPQEPEFCHKYSYGVRAIVQCIPAWLRFIQCLRRYRDTRRAFPHLVNAGKYSTTFFTVTFAALYSTHEEQNHSDTVVFFYLWVFFCIISSCYTLIWDLKMDWGLFDKNAGENTFLREEIVYPQKAYYYCAIIEDVILRFAWTIQISITATFKPHVGNIIATVFAPLEVFRRFVWNFFRLENEHLNNCGEFRAVRDISVAPLNADDQTLLEQMMDQEDGVRNRQKNRSWKYNQSISLRRPRLASQSKARDTKVLIEDTDDEANT.

The Cytoplasmic segment spans residues methionine 1 to proline 228. Residues lysine 2–glycine 224 form the SPX domain. Residues lysine 158–lysine 165 are important for inositol polyphosphate binding. A helical transmembrane segment spans residues alanine 229–leucine 259. The Extracellular portion of the chain corresponds to glutamate 260–threonine 264. A helical transmembrane segment spans residues valine 265–glycine 296. The Cytoplasmic segment spans residues valine 297–asparagine 309. A helical transmembrane segment spans residues asparagine 310 to alanine 337. Residues proline 338 to proline 343 are Extracellular-facing. The helical transmembrane segment at isoleucine 344–threonine 365 threads the bilayer. The segment at residues phenylalanine 366–threonine 383 is an intramembrane region (helical). Topologically, residues alanine 384 to lysine 388 are cytoplasmic. The chain crosses the membrane as a discontinuously helical span at residues valine 389–lysine 422. Positions 398 and 401 each coordinate phosphate. Residues tryptophan 423–leucine 429 are Extracellular-facing. Residues leucine 430 to arginine 471 form a discontinuously helical membrane-spanning segment. Residues phenylalanine 439 to glutamate 642 enclose the EXS domain. Position 472 (arginine 472) is a topological domain, cytoplasmic. The helical transmembrane segment at alanine 473–asparagine 503 threads the bilayer. Positions 482 and 483 each coordinate phosphate. Residues histidine 504–aspartate 506 are Extracellular-facing. The chain crosses the membrane as a helical span at residues threonine 507–tryptophan 534. At glycine 535–tyrosine 553 the chain is on the cytoplasmic side. A discontinuously helical transmembrane segment spans residues proline 554–lysine 584. A phosphate-binding site is contributed by arginine 570. The Extracellular portion of the chain corresponds to proline 585–histidine 586. The helical transmembrane segment at valine 587 to valine 625 threads the bilayer. Positions 602 and 603 each coordinate phosphate. The Cytoplasmic portion of the chain corresponds to arginine 626 to threonine 695. A Phosphoserine modification is found at serine 667. The interval proline 671–threonine 695 is disordered. Threonine 689 carries the post-translational modification Phosphothreonine.

It belongs to the SYG1 (TC 2.A.94) family. Homodimer. Expressed in pancreatic islets.

Its subcellular location is the cell membrane. The enzyme catalyses phosphate(in) = phosphate(out). In terms of biological role, inorganic ion transporter that mediates phosphate ion export across plasma membrane. Plays a major role in phosphate homeostasis, preventing intracellular phosphate accumulation and possible calcium phosphate precipitation, ultimately preserving calcium signaling. Binds inositol hexakisphosphate (Ins6P) and similar inositol polyphosphates, such as 5-diphospho-inositol pentakisphosphate (5-InsP7), which are important intracellular signaling molecules involved in regulation of phosphate flux. Functionally, (Microbial infection) Receptor for xenotropic and polytropic murine leukemia (X- and P-MLV) retroviruses. Confers susceptibility to X- or P-MLV infection in vitro. The sequence is that of Solute carrier family 53 member 1 from Mus musculus (Mouse).